The primary structure comprises 2009 residues: Sodium channel protein type 1 subunit alpha (2009 aa).

The Cytoplasmic segment spans residues 1–128; the sequence is MEQTVLVPPG…KIAIKILVHS (128 aa). The span at 28–48 shows a compositional bias: basic and acidic residues; that stretch reads RIAEEKAKNPKPDKKDDDENG. Residues 28 to 60 are disordered; the sequence is RIAEEKAKNPKPDKKDDDENGPKPNSDLEAGKN. The I repeat unit spans residues 110 to 454; that stretch reads ILTPFNPLRK…QQMIEQLKKQ (345 aa). A helical membrane pass occupies residues 129–146; the sequence is LFSMLIMCTILTNCVFMT. The Extracellular segment spans residues 147-152; it reads MSNPPD. A helical transmembrane segment spans residues 153 to 177; it reads WTKNVEYTFTGIYTFESLIKIIARG. Residues 178 to 188 lie on the Cytoplasmic side of the membrane; the sequence is FCLEDFTFLRD. A helical transmembrane segment spans residues 189-205; sequence PWNWLDFTVITFAYVTE. Topologically, residues 206 to 213 are extracellular; the sequence is FVDLGNVS. A glycan (N-linked (GlcNAc...) asparagine) is linked at Asn211. Residues 214–235 traverse the membrane as a helical segment; the sequence is ALRTFRVLRALKTISVIPGLKT. At 236 to 245 the chain is on the cytoplasmic side; that stretch reads IVGALIQSVK. The helical transmembrane segment at 246 to 269 threads the bilayer; sequence KLSDVMILTVFCLSVFALIGLQLF. At 270 to 369 the chain is on the extracellular side; sequence MGNLRNKCIQ…YGYTSFDTFS (100 aa). 2 cysteine pairs are disulfide-bonded: Cys277–Cys345 and Cys336–Cys351. N-linked (GlcNAc...) asparagine glycosylation is found at Asn284, Asn295, Asn301, Asn306, and Asn338. Residues 370-384 constitute an intramembrane region (pore-forming); sequence WAFLSLFRLMTQDFW. The Extracellular segment spans residues 385-397; that stretch reads ENLYQLTLRAAGK. The helical transmembrane segment at 398-423 threads the bilayer; that stretch reads TYMIFFVLVIFLGSFYLINLILAVVA. Residues 424 to 768 are Cytoplasmic-facing; that stretch reads MAYEEQNQAT…HVVNLVVMDP (345 aa). Residues 455–529 form a disordered region; the sequence is QEAAQQAATA…FQKSESEDSI (75 aa). Low complexity predominate over residues 456-466; sequence EAAQQAATATA. Ser470 carries the post-translational modification Phosphoserine. A compositionally biased stretch (low complexity) spans 479-492; the sequence is LSDSSSEASKLSSK. The span at 495-506 shows a compositional bias: basic residues; that stretch reads KERRNRRKKRKQ. The span at 520–529 shows a compositional bias: basic and acidic residues; sequence FQKSESEDSI. 6 positions are modified to phosphoserine: Ser523, Ser525, Ser550, Ser551, Ser607, and Ser730. Residues 584–627 are disordered; it reads VGSENDFADDEHSTFEDNESRRDSLFVPRRHGERRNSNLSQTSR. Residues 593–607 are compositionally biased toward basic and acidic residues; that stretch reads DEHSTFEDNESRRDS. The II repeat unit spans residues 750–1022; that stretch reads CSPYWLKVKH…QIAVDRMHKG (273 aa). A helical membrane pass occupies residues 769 to 787; that stretch reads FVDLAITICIVLNTLFMAM. The Extracellular segment spans residues 788–797; sequence EHYPMTDHFN. Residues 798-820 form a helical membrane-spanning segment; it reads NVLTVGNLVFTGIFTAEMFLKII. At 821 to 830 the chain is on the cytoplasmic side; that stretch reads AMDPYYYFQE. Residues 831–849 form a helical membrane-spanning segment; sequence GWNIFDGFIVTLSLVELGL. Residues 850–854 are Extracellular-facing; that stretch reads ANVEG. Residues 855–874 form a helical membrane-spanning segment; that stretch reads LSVLRSFRLLRVFKLAKSWP. The Cytoplasmic segment spans residues 875–891; it reads TLNMLIKIIGNSVGALG. The helical transmembrane segment at 892–912 threads the bilayer; that stretch reads NLTLVLAIIVFIFAVVGMQLF. The Extracellular portion of the chain corresponds to 913–938; that stretch reads GKSYKDCVCKIASDCQLPRWHMNDFF. Cys921 and Cys927 form a disulfide bridge. The segment at residues 939–952 is an intramembrane region (pore-forming); that stretch reads HSFLIVFRVLCGEW. The Extracellular portion of the chain corresponds to 953–965; sequence IETMWDCMEVAGQ. The cysteines at positions 959 and 968 are disulfide-linked. Residues 966 to 992 form a helical membrane-spanning segment; it reads AMCLTVFMMVMVIGNLVVLNLFLALLL. The Cytoplasmic segment spans residues 993-1218; it reads SSFSADNLAA…RTCFRIVEHN (226 aa). The disordered stretch occupies residues 1129–1163; that stretch reads TEDFSSESDLEESKEKLNESSSSSEGSTVDIGAPV. The III repeat unit spans residues 1200-1514; sequence RGKQWWNLRR…KKYYNAMKKL (315 aa). Residues 1219 to 1237 form a helical membrane-spanning segment; that stretch reads WFETFIVFMILLSSGALAF. Topologically, residues 1238-1250 are extracellular; it reads EDIYIDQRKTIKT. The chain crosses the membrane as a helical span at residues 1251–1276; that stretch reads MLEYADKVFTYIFILEMLLKWVAYGY. The Cytoplasmic portion of the chain corresponds to 1277 to 1278; that stretch reads QT. Residues 1279 to 1304 traverse the membrane as a helical segment; sequence YFTNAWCWLDFLIVDVSLVSLTANAL. Residues 1305–1313 lie on the Extracellular side of the membrane; it reads GYSELGAIK. The helical transmembrane segment at 1314 to 1332 threads the bilayer; sequence SLRTLRALRPLRALSRFEG. The Cytoplasmic segment spans residues 1333–1345; the sequence is MRVVVNALLGAIP. A helical transmembrane segment spans residues 1346–1369; sequence SIMNVLLVCLIFWLIFSIMGVNLF. Topologically, residues 1370–1415 are extracellular; it reads AGKFYHCINTTTGDRFDIEDVNNHTDCLKLIERNETARWKNVKVNF. Cys1376 and Cys1396 form a disulfide bridge. Asn1378, Asn1392, and Asn1403 each carry an N-linked (GlcNAc...) asparagine glycan. The pore-forming intramembrane region spans 1416 to 1433; the sequence is DNVGFGYLSLLQVATFKG. The Extracellular portion of the chain corresponds to 1434–1457; sequence WMDIMYAAVDSRNVELQPKYEESL. The helical transmembrane segment at 1458–1483 threads the bilayer; that stretch reads YMYLYFVIFIIFGSFFTLNLFIGVII. Residues 1484-1541 are Cytoplasmic-facing; the sequence is DNFNQQKKKFGGQDIFMTEEQKKYYNAMKKLGSKKPQKPIPRPGNKFQGMVFDFVTRQ. Ser1516 is subject to Phosphoserine; by PKC. One copy of the IV repeat lies at 1523–1821; it reads IPRPGNKFQG…WEKFDPDATQ (299 aa). The helical transmembrane segment at 1542–1560 threads the bilayer; that stretch reads VFDISIMILICLNMVTMMV. Topologically, residues 1561–1571 are extracellular; it reads ETDDQSEYVTT. The interval 1561–1571 is S1-S2 loop of repeat IV; sequence ETDDQSEYVTT. A helical transmembrane segment spans residues 1572 to 1593; sequence ILSRINLVFIVLFTGECVLKLI. The Cytoplasmic portion of the chain corresponds to 1594-1601; sequence SLRHYYFT. Residues 1602 to 1623 form a helical membrane-spanning segment; that stretch reads IGWNIFDFVVVILSIVGMFLAE. The segment at 1619 to 1636 is S3b-S4 loop of repeat IV; that stretch reads MFLAELIEKYFVSPTLFR. The Extracellular segment spans residues 1624-1636; it reads LIEKYFVSPTLFR. A helical membrane pass occupies residues 1637–1655; sequence VIRLARIGRILRLIKGAKG. Topologically, residues 1656–1665 are cytoplasmic; it reads IRTLLFALMM. A helical transmembrane segment spans residues 1666–1688; that stretch reads SLPALFNIGLLLFLVMFIYAIFG. The Extracellular segment spans residues 1689–1711; sequence MSNFAYVKREVGIDDMFNFETFG. An intramembrane region (pore-forming) is located at residues 1712–1726; sequence NSMICLFQITTSAGW. Residues 1727–1759 lie on the Extracellular side of the membrane; sequence DGLLAPILNSKPPDCDPNKVNPGSSVKGDCGNP. The cysteines at positions 1741 and 1756 are disulfide-linked. The helical transmembrane segment at 1760–1788 threads the bilayer; it reads SVGIFFFVSYIIISFLVVVNMYIAVILEN. Over 1789–2009 the chain is Cytoplasmic; that stretch reads FSVATEESAE…EGKDEKAKGK (221 aa). One can recognise an IQ domain in the interval 1915–1944; the sequence is EEVSAVIIQRAYRRHLLKRTVKQASFTYNK. The segment at 1986 to 2009 is disordered; sequence YDRVTKPIVEKHEQEGKDEKAKGK. The span at 1988 to 2009 shows a compositional bias: basic and acidic residues; sequence RVTKPIVEKHEQEGKDEKAKGK.

It belongs to the sodium channel (TC 1.A.1.10) family. Nav1.1/SCN1A subfamily. The Nav1.1 voltage-gated sodium channel consists of an ion-conducting alpha subunit SCN1A which is functional on its own regulated by one or more beta-1 (SCN1B), beta-2 (SCN2B), beta-3 (SCN3B) and beta-4 (SCN4B) subunits. SCN1B and SCN3B are non-covalently associated with SCN1A. SCN2B and SCN4B are disulfide-linked to SCN1A. SCN1B regulates both the expression at the plasma membrane and the voltage dependence of Nav1.1 inactivation. SCN3B and SCN4B reduce Nav1.1 conductance. Probably interacts with TMEM233; modulates the gating properties of NaV1.1. Interacts with FGF13; regulates the steady-state inactivation of Nav.1.1. Post-translationally, phosphorylation at Ser-1516 by PKC in a highly conserved cytoplasmic loop slows inactivation of the sodium channel and reduces peak sodium currents.

The protein resides in the cell membrane. It carries out the reaction Na(+)(in) = Na(+)(out). With respect to regulation, activated by the spider toxins Hm1a and Hm1b (H.maculata, AC P60992 and AC P0DOC5) eliciting acute pain and mechanical allodynia. Inhibited by the conotoxin GVIIJ. Inhibited by the spider beta/delta-theraphotoxin-Pre1a. Functionally, pore-forming subunit of Nav1.1, a voltage-gated sodium (Nav) channel that directly mediates the depolarizing phase of action potentials in excitable membranes. Navs, also called VGSCs (voltage-gated sodium channels) or VDSCs (voltage-dependent sodium channels), operate by switching between closed and open conformations depending on the voltage difference across the membrane. In the open conformation they allow Na(+) ions to selectively pass through the pore, along their electrochemical gradient. The influx of Na(+) ions provokes membrane depolarization, initiating the propagation of electrical signals throughout cells and tissues. By regulating the excitability of neurons, ensures that they respond appropriately to synaptic inputs, maintaining the balance between excitation and inhibition in brain neural circuits. Nav1.1 plays a role in controlling the excitability and action potential propagation from somatosensory neurons, thereby contributing to the sensory perception of mechanically-induced pain. This is Sodium channel protein type 1 subunit alpha from Homo sapiens (Human).